The following is a 689-amino-acid chain: Glycine--tRNA ligase beta subunit (689 aa).

This sequence belongs to the class-II aminoacyl-tRNA synthetase family. As to quaternary structure, tetramer of two alpha and two beta subunits.

The protein resides in the cytoplasm. The enzyme catalyses tRNA(Gly) + glycine + ATP = glycyl-tRNA(Gly) + AMP + diphosphate. This Hamiltonella defensa subsp. Acyrthosiphon pisum (strain 5AT) protein is Glycine--tRNA ligase beta subunit.